We begin with the raw amino-acid sequence, 143 residues long: Large ribosomal subunit protein uL11 (143 aa).

The protein belongs to the universal ribosomal protein uL11 family. As to quaternary structure, part of the ribosomal stalk of the 50S ribosomal subunit. Interacts with L10 and the large rRNA to form the base of the stalk. L10 forms an elongated spine to which L12 dimers bind in a sequential fashion forming a multimeric L10(L12)X complex. One or more lysine residues are methylated.

Its function is as follows. Forms part of the ribosomal stalk which helps the ribosome interact with GTP-bound translation factors. The chain is Large ribosomal subunit protein uL11 from Rhizobium johnstonii (strain DSM 114642 / LMG 32736 / 3841) (Rhizobium leguminosarum bv. viciae).